The sequence spans 310 residues: Olfactory receptor 2A25 (310 aa).

Topologically, residues 1–24 (MGGNQTSITEFLLLGFPIGPRIQM) are extracellular. Residue Asn-4 is glycosylated (N-linked (GlcNAc...) asparagine). Residues 25-48 (LLFGLFSLFYIFILLGNGTILGLI) form a helical membrane-spanning segment. The Cytoplasmic portion of the chain corresponds to 49–56 (SLDSRLHT). A helical membrane pass occupies residues 57–78 (PMYFFLSHLAVVDIACACSTVP). Over 79–99 (QMLVNLLHPAKPISFAGCMTQ) the chain is Extracellular. A disulfide bond links Cys-96 and Cys-188. Residues 100–119 (MFLFLSFAHTECLLLVVMSY) traverse the membrane as a helical segment. Topologically, residues 120–138 (DRYVAICHPLRYSTIMTWK) are cytoplasmic. A helical membrane pass occupies residues 139 to 157 (VCITLALTSWILGVLLALV). The Extracellular portion of the chain corresponds to 158–195 (HLVLLLPLSFCGPQKLNHFFCEIMAVLKLACADTHINE). A helical membrane pass occupies residues 196 to 218 (VMVLAGAVSVLVGAFFSTVISYV). Topologically, residues 219 to 235 (HILCAILKIQSGEGCQK) are cytoplasmic. The helical transmembrane segment at 236–258 (AFSICSSHLCVVGLFYGTAIIMY) threads the bilayer. Residues 259–271 (VEPQYESPKEQKK) lie on the Extracellular side of the membrane. A helical membrane pass occupies residues 272–291 (YLLLFHSLFNPMLNPLIYSL). The Cytoplasmic segment spans residues 292-310 (RNKEVQGTLKRMLEKKRTS).

It belongs to the G-protein coupled receptor 1 family.

Its subcellular location is the cell membrane. In terms of biological role, odorant receptor. The polypeptide is Olfactory receptor 2A25 (OR2A25) (Homo sapiens (Human)).